A 101-amino-acid chain; its full sequence is Small ribosomal subunit protein uS10 (101 aa).

Belongs to the universal ribosomal protein uS10 family. As to quaternary structure, part of the 30S ribosomal subunit.

Involved in the binding of tRNA to the ribosomes. This chain is Small ribosomal subunit protein uS10, found in Porphyromonas gingivalis (strain ATCC 33277 / DSM 20709 / CIP 103683 / JCM 12257 / NCTC 11834 / 2561).